Consider the following 212-residue polypeptide: Pyridoxine/pyridoxamine 5'-phosphate oxidase (212 aa).

Substrate-binding positions include 7 to 10 (RREY) and K65. FMN-binding positions include 60 to 65 (RIVLLK), 75 to 76 (FT), R81, K82, and Q104. The substrate site is built by Y122, R126, and S130. FMN-binding positions include 139-140 (QS) and W184. Position 190 to 192 (190 to 192 (RLH)) interacts with substrate. FMN is bound at residue R194.

This sequence belongs to the pyridoxamine 5'-phosphate oxidase family. As to quaternary structure, homodimer. FMN is required as a cofactor.

The catalysed reaction is pyridoxamine 5'-phosphate + O2 + H2O = pyridoxal 5'-phosphate + H2O2 + NH4(+). It catalyses the reaction pyridoxine 5'-phosphate + O2 = pyridoxal 5'-phosphate + H2O2. It functions in the pathway cofactor metabolism; pyridoxal 5'-phosphate salvage; pyridoxal 5'-phosphate from pyridoxamine 5'-phosphate: step 1/1. The protein operates within cofactor metabolism; pyridoxal 5'-phosphate salvage; pyridoxal 5'-phosphate from pyridoxine 5'-phosphate: step 1/1. Functionally, catalyzes the oxidation of either pyridoxine 5'-phosphate (PNP) or pyridoxamine 5'-phosphate (PMP) into pyridoxal 5'-phosphate (PLP). In Pseudoalteromonas translucida (strain TAC 125), this protein is Pyridoxine/pyridoxamine 5'-phosphate oxidase.